The following is a 265-amino-acid chain: Cytochrome c oxidase subunit 3 (265 aa).

6 consecutive transmembrane segments (helical) span residues 16-36 (PWPF…ILWL), 40-60 (PSFL…FSWW), 83-103 (CVAL…WTFF), 159-179 (VGPF…FLVQ), 198-218 (VFYL…IWLM), and 241-261 (IWYW…VYVW).

Belongs to the cytochrome c oxidase subunit 3 family. In terms of assembly, component of the cytochrome c oxidase (complex IV, CIV), a multisubunit enzyme composed of a catalytic core of 3 subunits and several supernumerary subunits. The complex exists as a monomer or a dimer and forms supercomplexes (SCs) in the inner mitochondrial membrane with ubiquinol-cytochrome c oxidoreductase (cytochrome b-c1 complex, complex III, CIII).

It is found in the mitochondrion inner membrane. It carries out the reaction 4 Fe(II)-[cytochrome c] + O2 + 8 H(+)(in) = 4 Fe(III)-[cytochrome c] + 2 H2O + 4 H(+)(out). Component of the cytochrome c oxidase, the last enzyme in the mitochondrial electron transport chain which drives oxidative phosphorylation. The respiratory chain contains 3 multisubunit complexes succinate dehydrogenase (complex II, CII), ubiquinol-cytochrome c oxidoreductase (cytochrome b-c1 complex, complex III, CIII) and cytochrome c oxidase (complex IV, CIV), that cooperate to transfer electrons derived from NADH and succinate to molecular oxygen, creating an electrochemical gradient over the inner membrane that drives transmembrane transport and the ATP synthase. Cytochrome c oxidase is the component of the respiratory chain that catalyzes the reduction of oxygen to water. Electrons originating from reduced cytochrome c in the intermembrane space (IMS) are transferred via the dinuclear copper A center (CU(A)) of subunit 2 and heme A of subunit 1 to the active site in subunit 1, a binuclear center (BNC) formed by heme A3 and copper B (CU(B)). The BNC reduces molecular oxygen to 2 water molecules using 4 electrons from cytochrome c in the IMS and 4 protons from the mitochondrial matrix. In Mytilus edulis (Blue mussel), this protein is Cytochrome c oxidase subunit 3 (COIII).